Consider the following 273-residue polypeptide: Sanguinarine reductase (273 aa).

Residue Ser153 is the Proton donor of the active site. Substrate contacts are provided by residues 157-161 and Lys175; that span reads CDPDH.

The protein belongs to the NAD(P)-dependent epimerase/dehydratase family. Monomer.

The enzyme catalyses dihydrosanguinarine + NADP(+) = sanguinarine + NADPH. The catalysed reaction is dihydrosanguinarine + NAD(+) = sanguinarine + NADH. It carries out the reaction dihydrochelirubine + NAD(+) = chelirubine + NADH. It catalyses the reaction dihydrochelirubine + NADP(+) = chelirubine + NADPH. Its activity is regulated as follows. Inhibited by iodoacetamide and irreversibly by its product, dihydrosanguinarine. Functionally, catalyzes the reduction of benzophenanthridines, preferentially sanguinarine, to the corresponding dihydroalkaloids. Involved in detoxifying the phytoalexins produced by plant itself. The sanguinarine produced by intact cells upon elicitation, after excretion and binding to cell wall elements, is rapidly reabsorbed and reduced to the less toxic dihydrosanguinarine. Can work with both NAD(P) or NAD as a hydrogen donor, but at low concentrations, the reaction velocity with NAD(P)H is threefold higher than with NADH. However, chelerythrine shows maximum conversion rates with NADH. The substrate preference is sanguinarine &gt; chelerythrine &gt; chelirubine, macarpine or 10-OH-chelerythrine. No activity with berberine or phenanthridine cations. The chain is Sanguinarine reductase from Eschscholzia californica (California poppy).